Consider the following 133-residue polypeptide: NAD(P)H-quinone oxidoreductase subunit 3 (133 aa).

The next 3 helical transmembrane spans lie at 22-44, 77-97, and 102-122; these read YLLGFLLISSLVPILSLTASRLL, MFALVFVIFDVETVFLYPWAV, and LGLLAFVEALIFITILVVGLA.

The protein belongs to the complex I subunit 3 family. NDH-1 can be composed of about 15 different subunits; different subcomplexes with different compositions have been identified which probably have different functions.

It localises to the cellular thylakoid membrane. The enzyme catalyses a plastoquinone + NADH + (n+1) H(+)(in) = a plastoquinol + NAD(+) + n H(+)(out). It catalyses the reaction a plastoquinone + NADPH + (n+1) H(+)(in) = a plastoquinol + NADP(+) + n H(+)(out). Its function is as follows. NDH-1 shuttles electrons from an unknown electron donor, via FMN and iron-sulfur (Fe-S) centers, to quinones in the respiratory and/or the photosynthetic chain. The immediate electron acceptor for the enzyme in this species is believed to be plastoquinone. Couples the redox reaction to proton translocation, and thus conserves the redox energy in a proton gradient. Cyanobacterial NDH-1 also plays a role in inorganic carbon-concentration. This is NAD(P)H-quinone oxidoreductase subunit 3 from Synechococcus sp. (strain ATCC 27144 / PCC 6301 / SAUG 1402/1) (Anacystis nidulans).